The following is a 350-amino-acid chain: Alcohol dehydrogenase 1 (350 aa).

Residues cysteine 44, threonine 46, histidine 67, cysteine 98, cysteine 101, cysteine 104, cysteine 112, and cysteine 154 each coordinate Zn(2+). Residues threonine 46 and histidine 67 each contribute to the an alcohol site. Threonine 46 is a binding site for NAD(+). Residues 178-182 (GAGGG), aspartate 202, lysine 207, 271-273 (IGL), and arginine 343 each bind NAD(+).

This sequence belongs to the zinc-containing alcohol dehydrogenase family. Homotetramer. It depends on Zn(2+) as a cofactor.

Its subcellular location is the cytoplasm. It localises to the secreted. It catalyses the reaction a primary alcohol + NAD(+) = an aldehyde + NADH + H(+). The catalysed reaction is a secondary alcohol + NAD(+) = a ketone + NADH + H(+). This Emericella nidulans (strain FGSC A4 / ATCC 38163 / CBS 112.46 / NRRL 194 / M139) (Aspergillus nidulans) protein is Alcohol dehydrogenase 1 (alcA).